The following is a 309-amino-acid chain: Glutaminase (309 aa).

Positions 64, 114, 160, 167, 191, 243, and 261 each coordinate substrate.

Belongs to the glutaminase family. In terms of assembly, homotetramer.

It carries out the reaction L-glutamine + H2O = L-glutamate + NH4(+). The chain is Glutaminase from Methylobacterium nodulans (strain LMG 21967 / CNCM I-2342 / ORS 2060).